The chain runs to 800 residues: Putative antiporter subunit mnhA2 (800 aa).

21 consecutive transmembrane segments (helical) span residues 1-21 (MSLV…LFTL), 29-49 (VAGY…IMKI), 78-98 (GLSL…FFYA), 109-129 (LPRF…IVIA), 133-153 (ILMY…ISYW), 167-187 (FMIT…LYII), 209-229 (FIPM…QFPF), 241-261 (TPVS…FLLF), 272-292 (VYIY…SLTA), 300-320 (GILA…VGLG), 336-356 (ILVL…KCAL), 387-407 (IVML…GFLS), 424-444 (YGFV…ILTF), 472-492 (PWLF…IFFV), 528-548 (VNLP…LALV), 595-615 (IMIT…TVGF), 627-647 (GPLE…LIFI), 651-671 (LTMV…FIAM), 676-696 (LALT…VSFS), 712-732 (TFKI…IFVA), and 768-788 (LDTM…YTLL).

This sequence belongs to the CPA3 antiporters (TC 2.A.63) subunit A family. May form a heterooligomeric complex that consists of seven subunits: mnhA2, mnhB2, mnhC2, mnhD2, mnhE2, mnhF2 and mnhG2.

It is found in the cell membrane. This Staphylococcus epidermidis (strain ATCC 12228 / FDA PCI 1200) protein is Putative antiporter subunit mnhA2 (mnhA2).